The sequence spans 323 residues: UDP-glucuronate 4-epimerase (323 aa).

NAD(+) is bound at residue 11–13 (GFI). The active-site Proton acceptor is the Tyr-152. Position 156 (Lys-156) interacts with NAD(+).

It belongs to the NAD(P)-dependent epimerase/dehydratase family. The cofactor is NAD(+).

The catalysed reaction is UDP-alpha-D-glucuronate = UDP-alpha-D-galacturonate. Its function is as follows. Catalyzes the interconversion of UDP-D-glucuronic acid (UDP-GlcA) and UDP-D-galacturonic acid (UDP-GalA). In Thermodesulfobacterium geofontis (strain OPF15), this protein is UDP-glucuronate 4-epimerase.